The sequence spans 310 residues: NADH-cytochrome b5 reductase 1 (310 aa).

A helical membrane pass occupies residues 32–52 (EWLPYAVALAAILSGGKVFSN). In terms of domain architecture, FAD-binding FR-type spans 61-166 (TEFQNFELKE…RGPKGAMVYT (106 aa)). Residues 146–161 (AGLR…GPKG) and 172–209 (KIGM…QVDL) contribute to the FAD site.

It belongs to the flavoprotein pyridine nucleotide cytochrome reductase family. Monomer. Component of the 2-(3-amino-3-carboxypropyl)histidine synthase complex composed of DPH1, DPH2, DPH3 and a NADH-dependent reductase, predominantly CBR1. FAD is required as a cofactor.

The protein localises to the mitochondrion outer membrane. It carries out the reaction 2 Fe(III)-[cytochrome b5] + NADH = 2 Fe(II)-[cytochrome b5] + NAD(+) + H(+). The enzyme catalyses 2 Fe(3+)-[Dph3] + NADH = 2 Fe(2+)-[Dph3] + NAD(+) + H(+). The protein operates within protein modification; peptidyl-diphthamide biosynthesis. NADH-dependent reductase for DPH3 and cytochrome b5. Required for the first step of diphthamide biosynthesis, a post-translational modification of histidine which occurs in elongation factor 2. DPH1 and DPH2 transfer a 3-amino-3-carboxypropyl (ACP) group from S-adenosyl-L-methionine (SAM) to a histidine residue, the reaction is assisted by a reduction system comprising DPH3 and a NADH-dependent reductase, predominantly CBR1. By reducing DPH3, also involved in the formation of the tRNA wobble base modification mcm5s 2U (5-methoxycarbonylmethyl-2-thiouridine), mediated by the elongator complex. The cytochrome b5/NADH cytochrome b5 reductase electron transfer system supports the catalytic activity of several sterol biosynthetic enzymes. The sequence is that of NADH-cytochrome b5 reductase 1 (CBR1) from Ajellomyces capsulatus (strain NAm1 / WU24) (Darling's disease fungus).